A 206-amino-acid chain; its full sequence is Small ribosomal subunit protein uS4A (206 aa).

The region spanning 98–164 (LRLDNVAYKL…EKFKTFAENP (67 aa)) is the S4 RNA-binding domain.

It belongs to the universal ribosomal protein uS4 family. As to quaternary structure, part of the 30S ribosomal subunit. Contacts protein S5. The interaction surface between S4 and S5 is involved in control of translational fidelity.

Functionally, one of the primary rRNA binding proteins, it binds directly to 16S rRNA where it nucleates assembly of the body of the 30S subunit. Its function is as follows. With S5 and S12 plays an important role in translational accuracy. The protein is Small ribosomal subunit protein uS4A (rspD1) of Clostridium acetobutylicum (strain ATCC 824 / DSM 792 / JCM 1419 / IAM 19013 / LMG 5710 / NBRC 13948 / NRRL B-527 / VKM B-1787 / 2291 / W).